Here is a 326-residue protein sequence, read N- to C-terminus: Ribosomal large subunit pseudouridine synthase D (326 aa).

The S4 RNA-binding domain occupies 18-91; the sequence is QRLDQALAEM…IPLDIVYEDE (74 aa). Asp-139 is an active-site residue.

Belongs to the pseudouridine synthase RluA family. In terms of assembly, in late stage pre-50S ribosomal subunit interacts with ObgE and DarP(YjgA).

It localises to the cytoplasm. It catalyses the reaction uridine(1911/1915/1917) in 23S rRNA = pseudouridine(1911/1915/1917) in 23S rRNA. Responsible for synthesis of pseudouridine from uracil at positions 1911, 1915 and 1917 in 23S ribosomal RNA. Other positions are not modified. Uridine isomerization occurs as a late step during the assembly of the large ribosomal subunit. Member of a network of 50S ribosomal subunit biogenesis factors (ObgE, RluD, RsfS and DarP(YjgA)) which assembles along the 30S-50S interface, allowing 23S rRNA modification and preventing incorrect 23S rRNA structures from forming. The protein is Ribosomal large subunit pseudouridine synthase D of Escherichia coli (strain K12).